We begin with the raw amino-acid sequence, 108 residues long: Putative disulfide oxidoreductase YuzD (108 aa).

Cysteine 16 and cysteine 19 are oxidised to a cystine.

The sequence is that of Putative disulfide oxidoreductase YuzD (yuzD) from Bacillus subtilis (strain 168).